The following is a 368-amino-acid chain: Methionine import ATP-binding protein MetN (368 aa).

The ABC transporter domain maps to Ile5–Ile260. Gly41–Ser48 contributes to the ATP binding site.

Belongs to the ABC transporter superfamily. Methionine importer (TC 3.A.1.24) family. The complex is composed of two ATP-binding proteins (MetN), two transmembrane proteins (MetI) and a solute-binding protein (MetQ).

It localises to the cell membrane. It catalyses the reaction L-methionine(out) + ATP + H2O = L-methionine(in) + ADP + phosphate + H(+). The catalysed reaction is D-methionine(out) + ATP + H2O = D-methionine(in) + ADP + phosphate + H(+). Functionally, part of the ABC transporter complex MetNIQ involved in methionine import. Responsible for energy coupling to the transport system. This Lactococcus lactis subsp. cremoris (strain MG1363) protein is Methionine import ATP-binding protein MetN.